Reading from the N-terminus, the 117-residue chain is Large ribosomal subunit protein bL20 (117 aa).

The protein belongs to the bacterial ribosomal protein bL20 family.

Its function is as follows. Binds directly to 23S ribosomal RNA and is necessary for the in vitro assembly process of the 50S ribosomal subunit. It is not involved in the protein synthesizing functions of that subunit. The sequence is that of Large ribosomal subunit protein bL20 from Nitratidesulfovibrio vulgaris (strain DSM 19637 / Miyazaki F) (Desulfovibrio vulgaris).